Here is a 152-residue protein sequence, read N- to C-terminus: Large ribosomal subunit protein uL15 (152 aa).

This sequence belongs to the universal ribosomal protein uL15 family. In terms of assembly, part of the 50S ribosomal subunit.

In terms of biological role, binds to the 23S rRNA. In Staphylothermus marinus (strain ATCC 43588 / DSM 3639 / JCM 9404 / F1), this protein is Large ribosomal subunit protein uL15.